Reading from the N-terminus, the 383-residue chain is S-adenosylmethionine synthase (383 aa).

His-15 contacts ATP. Residue Asp-17 coordinates Mg(2+). Glu-43 contributes to the K(+) binding site. The L-methionine site is built by Glu-56 and Gln-99. The flexible loop stretch occupies residues 99–109 (QSSDINQGVDR). ATP-binding positions include 164–166 (DAK), 230–231 (RF), Asp-239, 245–246 (RK), Ala-262, and Lys-266. L-methionine is bound at residue Asp-239. Lys-270 is a binding site for L-methionine.

It belongs to the AdoMet synthase family. In terms of assembly, homotetramer; dimer of dimers. The cofactor is Mg(2+). It depends on K(+) as a cofactor.

It localises to the cytoplasm. The catalysed reaction is L-methionine + ATP + H2O = S-adenosyl-L-methionine + phosphate + diphosphate. It functions in the pathway amino-acid biosynthesis; S-adenosyl-L-methionine biosynthesis; S-adenosyl-L-methionine from L-methionine: step 1/1. In terms of biological role, catalyzes the formation of S-adenosylmethionine (AdoMet) from methionine and ATP. The overall synthetic reaction is composed of two sequential steps, AdoMet formation and the subsequent tripolyphosphate hydrolysis which occurs prior to release of AdoMet from the enzyme. The protein is S-adenosylmethionine synthase of Mannheimia succiniciproducens (strain KCTC 0769BP / MBEL55E).